We begin with the raw amino-acid sequence, 694 residues long: MAAVRSLRVSVKSDSASDRSESDSESDSDRDAREAEPMEVEEGEVELESIPVRRSLKELLPDTSRRYENKAGTFITGIDVTSKEAIEKKEKRARRFHFRAEENLTQKDVVLERDLLKKMIPKVRLEALHMSGVDDMSTQDVFGYFKEYPPAHIEWIDDASCNVVWLDDITSTRALINLSRMPDKEEVTNTDSSKPSELPVQTQKARRSRGSDDDDDDDEEEEGEVDDDDDDDEEDEKARDIEDETEKKPQETRETSLSQAERDSLLQNEPRPTVKPFKGNKLFLRFATHDDKKELGAARRSRYYMKYGNPNYGGMKGILSNSWKRRYHTRRIQRDILKTKKPLIGDSMGHTPPYTHRHSADLVNLPEEPIEEEEEEEEDGEEDMDADDRVVEYKDRGEKERGPRLVEGGLRSRLGGPSPTSSDSDEMDYDLELKMISTPSPKKSMKMTMYADEVETNLRSLRNSIRTESSGSVKSRIGGGGGGGSGGAVEGRGEGGSSKSTSEKVTDVRQLLEEKRQGLSQQRSRPPVATSGKTDVRQRLGKRPHSPERRRSVSPVISRKTASRREPLSDVRSRLGVAKHDNRSLFSEPPKDKKTGGLWSRLGPSHKDSGSGDEDKPSSRASSSRGIRRRKDEDSDGVEDEDEEDDSHLQKMWGAMIKQKEQQSNKMKKSRLDNLPSLQIEISRDGSNGSDSDS.

Residues 1–47 (MAAVRSLRVSVKSDSASDRSESDSESDSDRDAREAEPMEVEEGEVEL) form a disordered region. The segment covering 15 to 36 (SASDRSESDSESDSDRDAREAE) has biased composition (basic and acidic residues). The segment covering 37–47 (PMEVEEGEVEL) has biased composition (acidic residues). Residues 126–187 (EALHMSGVDD…LSRMPDKEEV (62 aa)) are RNA recognition motif (RRM) domain. A WLDD motif; essential for 7-methylguanosine-containing mRNA cap binding motif is present at residues 155–158 (WIDD). Disordered stretches follow at residues 183–277 (DKEE…VKPF), 336–430 (ILKT…MDYD), and 461–694 (LRNS…DSDS). Residues 189–203 (NTDSSKPSELPVQTQ) are compositionally biased toward polar residues. Over residues 212–235 (DDDDDDDEEEEGEVDDDDDDDEED) the composition is skewed to acidic residues. Residues 236–264 (EKARDIEDETEKKPQETRETSLSQAERDS) show a composition bias toward basic and acidic residues. The span at 368–386 (EPIEEEEEEEEDGEEDMDA) shows a compositional bias: acidic residues. Residues 387–404 (DDRVVEYKDRGEKERGPR) show a composition bias toward basic and acidic residues. Over residues 477–496 (IGGGGGGGSGGAVEGRGEGG) the composition is skewed to gly residues. Basic and acidic residues-rich tracts occupy residues 501 to 517 (TSEKVTDVRQLLEEKRQ), 563 to 595 (SRREPLSDVRSRLGVAKHDNRSLFSEPPKDKKT), and 605 to 618 (SHKDSGSGDEDKPS). Positions 634-646 (DSDGVEDEDEEDD) are enriched in acidic residues. Residues 685-694 (DGSNGSDSDS) show a composition bias toward low complexity.

The protein belongs to the NCBP3 family. As to quaternary structure, component of an alternative cap-binding complex (CBC) composed of NCBP1/CBP80 and NCBP3.

It localises to the nucleus. It is found in the cytoplasm. Associates with NCBP1/CBP80 to form an alternative cap-binding complex (CBC) which plays a key role in mRNA export. NCBP3 serves as adapter protein linking the capped RNAs (m7GpppG-capped RNA) to NCBP1/CBP80. Unlike the conventional CBC with NCBP2 which binds both small nuclear RNA (snRNA) and messenger (mRNA) and is involved in their export from the nucleus, the alternative CBC with NCBP3 does not bind snRNA and associates only with mRNA thereby playing a role in only mRNA export. This is Nuclear cap-binding protein subunit 3 from Danio rerio (Zebrafish).